The chain runs to 189 residues: NADH-quinone oxidoreductase subunit B (189 aa).

Residues Cys-39, Cys-40, Cys-104, and Cys-135 each coordinate [4Fe-4S] cluster.

This sequence belongs to the complex I 20 kDa subunit family. In terms of assembly, NDH-1 is composed of 14 different subunits. Subunits NuoB, C, D, E, F, and G constitute the peripheral sector of the complex. [4Fe-4S] cluster serves as cofactor.

It localises to the cell inner membrane. The catalysed reaction is a quinone + NADH + 5 H(+)(in) = a quinol + NAD(+) + 4 H(+)(out). Its function is as follows. NDH-1 shuttles electrons from NADH, via FMN and iron-sulfur (Fe-S) centers, to quinones in the respiratory chain. The immediate electron acceptor for the enzyme in this species is believed to be a menaquinone. Couples the redox reaction to proton translocation (for every two electrons transferred, four hydrogen ions are translocated across the cytoplasmic membrane), and thus conserves the redox energy in a proton gradient. The protein is NADH-quinone oxidoreductase subunit B of Chlorobium phaeobacteroides (strain DSM 266 / SMG 266 / 2430).